The chain runs to 206 residues: Protein GrpE (206 aa).

The tract at residues 1–36 is disordered; sequence MTDSNGPKDNNQDQAQAAADPVVSKPYIMPDDPEDG.

It belongs to the GrpE family. Homodimer.

It is found in the cytoplasm. Its function is as follows. Participates actively in the response to hyperosmotic and heat shock by preventing the aggregation of stress-denatured proteins, in association with DnaK and GrpE. It is the nucleotide exchange factor for DnaK and may function as a thermosensor. Unfolded proteins bind initially to DnaJ; upon interaction with the DnaJ-bound protein, DnaK hydrolyzes its bound ATP, resulting in the formation of a stable complex. GrpE releases ADP from DnaK; ATP binding to DnaK triggers the release of the substrate protein, thus completing the reaction cycle. Several rounds of ATP-dependent interactions between DnaJ, DnaK and GrpE are required for fully efficient folding. The sequence is that of Protein GrpE from Rhodopseudomonas palustris (strain HaA2).